The sequence spans 164 residues: MKITAIYPGTFDPLTNGHTDLIQRASKMFDTVIVAIAHNPSKQPCFSLDERVALANTLLTHIDNVKVIGFSGLLADLARDHNANVLIRGIRAVSDFDYEFQLANMNRRLNPDLESVFLTPSERNSFISSTLVKEVARHNGDVSEFVDPIVMAALNKKLGCSYSK.

Substrate is bound at residue threonine 10. ATP contacts are provided by residues 10 to 11 (TF) and histidine 18. Residues lysine 42, leucine 74, and arginine 88 each contribute to the substrate site. Residues 89–91 (GIR), glutamate 99, and 124–130 (NSFISST) contribute to the ATP site.

This sequence belongs to the bacterial CoaD family. As to quaternary structure, homohexamer. Requires Mg(2+) as cofactor.

It is found in the cytoplasm. It carries out the reaction (R)-4'-phosphopantetheine + ATP + H(+) = 3'-dephospho-CoA + diphosphate. It participates in cofactor biosynthesis; coenzyme A biosynthesis; CoA from (R)-pantothenate: step 4/5. Its function is as follows. Reversibly transfers an adenylyl group from ATP to 4'-phosphopantetheine, yielding dephospho-CoA (dPCoA) and pyrophosphate. The chain is Phosphopantetheine adenylyltransferase from Pseudoalteromonas translucida (strain TAC 125).